Reading from the N-terminus, the 285-residue chain is Elongation factor Ts (285 aa).

Positions 84–87 (TDFV) are involved in Mg(2+) ion dislocation from EF-Tu.

Belongs to the EF-Ts family.

It localises to the cytoplasm. Functionally, associates with the EF-Tu.GDP complex and induces the exchange of GDP to GTP. It remains bound to the aminoacyl-tRNA.EF-Tu.GTP complex up to the GTP hydrolysis stage on the ribosome. The chain is Elongation factor Ts from Bifidobacterium animalis subsp. lactis (strain AD011).